The primary structure comprises 150 residues: MIPGEILPGEDPVEINPGRPVRTVLVRNTGDRPVQVGSHYHFAAANPALDFDRDLAWGHRLAVPAGTAVRFEPGVEREVDLVPLTGARIVPGLRPESAGPLDGRAVRAGGAVRAGGAVRAGGAVVGDSPAATPGTTGATGDLPGYLGEGS.

The segment covering 122 to 140 (GAVVGDSPAATPGTTGATG) has biased composition (low complexity). The tract at residues 122–150 (GAVVGDSPAATPGTTGATGDLPGYLGEGS) is disordered.

Belongs to the urease beta subunit family. As to quaternary structure, heterotrimer of UreA (gamma), UreB (beta) and UreC (alpha) subunits. Three heterotrimers associate to form the active enzyme.

The protein resides in the cytoplasm. It carries out the reaction urea + 2 H2O + H(+) = hydrogencarbonate + 2 NH4(+). Its pathway is nitrogen metabolism; urea degradation; CO(2) and NH(3) from urea (urease route): step 1/1. The protein is Urease subunit beta of Frankia alni (strain DSM 45986 / CECT 9034 / ACN14a).